Here is a 350-residue protein sequence, read N- to C-terminus: MAYKNASSPHQKQRRTTSQVMVLVILCLIPGVFLQSYFFGYANLIQISLACLAALASEAFILKIRNRPVLNTLKDASALLTAILLAISIPPLAPWWIVVIGTIFAIIFVKQIYGGLGQNIFNPAMAGYVLLLISFPVQMTSWLPVQSLQPFSLTLMDQINAIFTGSTLDGYSVAQLSVSIDGLSMATPLNTVRDALHNGFTVTEIFNSVQFKASSWQQIYWINGAFLAGGLILLFKRIVHWHIPMSFLLGIGIFSFIAFAYSPDLNAPPLFHLFSGATMLGAFFILSDPVSASTTVKGRILYALLIAFIVVIIRNVGGYPDAVAFAVLLGNMCVPLIDYYTQPKVYGGRK.

5 helical membrane-spanning segments follow: residues 20–40 (VMVL…YFFG), 44–64 (LIQI…ILKI), 68–88 (PVLN…LAIS), 89–109 (IPPL…IIFV), and 125–145 (MAGY…WLPV). Thr187 is modified (FMN phosphoryl threonine). The next 5 membrane-spanning stretches (helical) occupy residues 215 to 235 (SWQQ…ILLF), 241 to 261 (WHIP…AFAY), 267 to 287 (APPL…FILS), 300 to 320 (ILYA…GGYP), and 322 to 342 (AVAF…YYTQ).

The protein belongs to the NqrB/RnfD family. As to quaternary structure, the complex is composed of six subunits: RnfA, RnfB, RnfC, RnfD, RnfE and RnfG. Requires FMN as cofactor.

It localises to the cell inner membrane. In terms of biological role, part of a membrane-bound complex that couples electron transfer with translocation of ions across the membrane. The sequence is that of Ion-translocating oxidoreductase complex subunit D from Psychromonas ingrahamii (strain DSM 17664 / CCUG 51855 / 37).